A 710-amino-acid chain; its full sequence is MIPLTLSSPSLNRLVLSTSRYSHSLFLSNFNSLSLIHRKLPYKPLFGARCHASSSSSSSSSFTAKSSKEIRKAQTKVVVDEKLSSIRRLFSEPGVGIDAYIIPSQDAHQSEFIAECYARRAYISGFTGSAGTAVVTKDKAALWTDGRYFLQAEKQLNSSWILMRAGNPGVPTASEWIADVLAPGGRVGIDPFLFSADAAEELKEVIAKKNHELVYLYNVNLVDEIWKDSRPKPPSRQIRIHDLKYAGLDVASKLLSLRNQIMDAGTSAIVISMLDEIAWVLNLRGSDVPHSPVMYAYLIVEVDQAQLFVDNSKVTVEVKDHLKNAGIELRPYDSILQGIDSLAARGAQLLMDPSTLNVAIISTYKSACERYSRNFESEAKVKTKFTDSSSGYTANPSGIYMQSPISWAKAIKNDAELKGMKNSHLRDAAALAHFWAWLEEEVHKNANLTEVDVADRLLEFRSMQDGFMDTSFDTISGSGANGAIIHYKPEPESCSRVDPQKLFLLDSGAQYVDGTTDITRTVHFSEPSAREKECFTRVLQGHIALDQAVFPEGTPGFVLDGFARSSLWKIGLDYRHGTGHGVGAALNVHEGPQSISFRYGNMTPLQNGMIVSNEPGYYEDHAFGIRIENLLHVRDAETPNRFGGATYLGFEKLTFFPIQTKMVDVSLLSDTEVDWLNSYHAEVWEKVSPLLEGSTTQQWLWNNTRPLAKP.

The transit peptide at 1–79 (MIPLTLSSPS…IRKAQTKVVV (79 aa)) directs the protein to the chloroplast. Positions 147 and 486 each coordinate a peptide. 3 residues coordinate Mn(2+): Asp506, Asp517, and His580. Residues His580, His589, and Glu614 each coordinate a peptide. Glu614 and Glu628 together coordinate Mn(2+).

This sequence belongs to the peptidase M24B family. In terms of assembly, homodimer. Mn(2+) is required as a cofactor.

The protein resides in the plastid. The protein localises to the chloroplast. It carries out the reaction Release of any N-terminal amino acid, including proline, that is linked to proline, even from a dipeptide or tripeptide.. Catalyzes the removal of a penultimate prolyl residue from the N-termini of peptides, such as Arg-Pro-Pro. This is Aminopeptidase P2 from Arabidopsis thaliana (Mouse-ear cress).